The following is a 143-amino-acid chain: Acyl carrier protein 3, chloroplastic (143 aa).

Residues 1-60 constitute a chloroplast transit peptide; that stretch reads MATAAAGSSLICIKSASCSLNRAQVPSGLSSLRSVSLPISGKIFPSLRSSRGPLSFRVCC. In terms of domain architecture, Carrier spans 64–139; the sequence is QETVTRVCEI…DAADLIEKLV (76 aa). Position 99 is an O-(pantetheine 4'-phosphoryl)serine (Ser-99).

It belongs to the acyl carrier protein (ACP) family. In terms of processing, 4'-phosphopantetheine is transferred from CoA to a specific serine of apo-ACP by acpS. This modification is essential for activity because fatty acids are bound in thioester linkage to the sulfhydryl of the prosthetic group.

Its subcellular location is the plastid. The protein resides in the chloroplast. It functions in the pathway lipid metabolism; fatty acid biosynthesis. Its function is as follows. Carrier of the growing fatty acid chain in fatty acid biosynthesis. This Cuphea lanceolata (Cigar flower) protein is Acyl carrier protein 3, chloroplastic (ACL1.3).